Consider the following 510-residue polypeptide: Histidine ammonia-lyase (510 aa).

Positions 143–145 (ASG) form a cross-link, 5-imidazolinone (Ala-Gly). A 2,3-didehydroalanine (Ser) modification is found at S144.

The protein belongs to the PAL/histidase family. Post-translationally, contains an active site 4-methylidene-imidazol-5-one (MIO), which is formed autocatalytically by cyclization and dehydration of residues Ala-Ser-Gly.

It localises to the cytoplasm. It catalyses the reaction L-histidine = trans-urocanate + NH4(+). It functions in the pathway amino-acid degradation; L-histidine degradation into L-glutamate; N-formimidoyl-L-glutamate from L-histidine: step 1/3. The sequence is that of Histidine ammonia-lyase from Photobacterium profundum (strain SS9).